Consider the following 361-residue polypeptide: UDP-N-acetylglucosamine--N-acetylmuramyl-(pentapeptide) pyrophosphoryl-undecaprenol N-acetylglucosamine transferase (361 aa).

UDP-N-acetyl-alpha-D-glucosamine contacts are provided by residues threonine 21–glycine 23, asparagine 131, arginine 172, serine 195, isoleucine 250, and glutamine 295.

It belongs to the glycosyltransferase 28 family. MurG subfamily.

The protein localises to the cell inner membrane. It carries out the reaction di-trans,octa-cis-undecaprenyl diphospho-N-acetyl-alpha-D-muramoyl-L-alanyl-D-glutamyl-meso-2,6-diaminopimeloyl-D-alanyl-D-alanine + UDP-N-acetyl-alpha-D-glucosamine = di-trans,octa-cis-undecaprenyl diphospho-[N-acetyl-alpha-D-glucosaminyl-(1-&gt;4)]-N-acetyl-alpha-D-muramoyl-L-alanyl-D-glutamyl-meso-2,6-diaminopimeloyl-D-alanyl-D-alanine + UDP + H(+). It functions in the pathway cell wall biogenesis; peptidoglycan biosynthesis. Its function is as follows. Cell wall formation. Catalyzes the transfer of a GlcNAc subunit on undecaprenyl-pyrophosphoryl-MurNAc-pentapeptide (lipid intermediate I) to form undecaprenyl-pyrophosphoryl-MurNAc-(pentapeptide)GlcNAc (lipid intermediate II). In Solibacter usitatus (strain Ellin6076), this protein is UDP-N-acetylglucosamine--N-acetylmuramyl-(pentapeptide) pyrophosphoryl-undecaprenol N-acetylglucosamine transferase.